A 184-amino-acid chain; its full sequence is NADH-quinone oxidoreductase subunit B (184 aa).

[4Fe-4S] cluster-binding residues include cysteine 37, cysteine 38, cysteine 103, and cysteine 132.

The protein belongs to the complex I 20 kDa subunit family. In terms of assembly, NDH-1 is composed of 14 different subunits. Subunits NuoB, C, D, E, F, and G constitute the peripheral sector of the complex. [4Fe-4S] cluster serves as cofactor.

It is found in the cell membrane. The enzyme catalyses a quinone + NADH + 5 H(+)(in) = a quinol + NAD(+) + 4 H(+)(out). Its function is as follows. NDH-1 shuttles electrons from NADH, via FMN and iron-sulfur (Fe-S) centers, to quinones in the respiratory chain. The immediate electron acceptor for the enzyme in this species is believed to be a menaquinone. Couples the redox reaction to proton translocation (for every two electrons transferred, four hydrogen ions are translocated across the cytoplasmic membrane), and thus conserves the redox energy in a proton gradient. This Mycobacterium marinum (strain ATCC BAA-535 / M) protein is NADH-quinone oxidoreductase subunit B.